The following is a 310-amino-acid chain: Aspartate carbamoyltransferase catalytic subunit (310 aa).

Carbamoyl phosphate contacts are provided by arginine 54 and threonine 55. Lysine 84 contacts L-aspartate. Carbamoyl phosphate contacts are provided by arginine 105, histidine 134, and glutamine 137. L-aspartate contacts are provided by arginine 167 and arginine 229. 2 residues coordinate carbamoyl phosphate: leucine 267 and proline 268.

The protein belongs to the aspartate/ornithine carbamoyltransferase superfamily. ATCase family. As to quaternary structure, heterododecamer (2C3:3R2) of six catalytic PyrB chains organized as two trimers (C3), and six regulatory PyrI chains organized as three dimers (R2).

The catalysed reaction is carbamoyl phosphate + L-aspartate = N-carbamoyl-L-aspartate + phosphate + H(+). The protein operates within pyrimidine metabolism; UMP biosynthesis via de novo pathway; (S)-dihydroorotate from bicarbonate: step 2/3. Functionally, catalyzes the condensation of carbamoyl phosphate and aspartate to form carbamoyl aspartate and inorganic phosphate, the committed step in the de novo pyrimidine nucleotide biosynthesis pathway. The chain is Aspartate carbamoyltransferase catalytic subunit from Enterobacter sp. (strain 638).